Reading from the N-terminus, the 199-residue chain is Recombination protein RecR (199 aa).

The segment at 57 to 72 adopts a C4-type zinc-finger fold; that stretch reads CRQCRVLTEEPVCGLC. One can recognise a Toprim domain in the interval 80–175; that stretch reads SLLCVVEGPA…RTTRIAHGVP (96 aa).

The protein belongs to the RecR family.

Functionally, may play a role in DNA repair. It seems to be involved in an RecBC-independent recombinational process of DNA repair. It may act with RecF and RecO. In Alkalilimnicola ehrlichii (strain ATCC BAA-1101 / DSM 17681 / MLHE-1), this protein is Recombination protein RecR.